Here is a 311-residue protein sequence, read N- to C-terminus: Methionyl-tRNA formyltransferase (311 aa).

Position 112 to 115 (112 to 115 (SLLP)) interacts with (6S)-5,6,7,8-tetrahydrofolate.

It belongs to the Fmt family.

The enzyme catalyses L-methionyl-tRNA(fMet) + (6R)-10-formyltetrahydrofolate = N-formyl-L-methionyl-tRNA(fMet) + (6S)-5,6,7,8-tetrahydrofolate + H(+). In terms of biological role, attaches a formyl group to the free amino group of methionyl-tRNA(fMet). The formyl group appears to play a dual role in the initiator identity of N-formylmethionyl-tRNA by promoting its recognition by IF2 and preventing the misappropriation of this tRNA by the elongation apparatus. The chain is Methionyl-tRNA formyltransferase from Bartonella henselae (strain ATCC 49882 / DSM 28221 / CCUG 30454 / Houston 1) (Rochalimaea henselae).